The chain runs to 91 residues: Small ribosomal subunit protein uS19 (91 aa).

Belongs to the universal ribosomal protein uS19 family.

Functionally, protein S19 forms a complex with S13 that binds strongly to the 16S ribosomal RNA. The sequence is that of Small ribosomal subunit protein uS19 from Desulfotalea psychrophila (strain LSv54 / DSM 12343).